Consider the following 636-residue polypeptide: Methionine--tRNA ligase (636 aa).

The short motif at 12 to 22 (YYVNGDPHVGS) is the 'HIGH' region element. Zn(2+)-binding residues include Cys-127, Cys-130, Cys-145, and Cys-148. Positions 298–302 (KMSKS) match the 'KMSKS' region motif. An ATP-binding site is contributed by Lys-301. The 102-residue stretch at 535–636 (EFNKIEIKVV…KTVEAGAIVS (102 aa)) folds into the tRNA-binding domain.

This sequence belongs to the class-I aminoacyl-tRNA synthetase family. MetG type 2A subfamily. Homodimer. It depends on Zn(2+) as a cofactor.

Its subcellular location is the cytoplasm. The enzyme catalyses tRNA(Met) + L-methionine + ATP = L-methionyl-tRNA(Met) + AMP + diphosphate. Is required not only for elongation of protein synthesis but also for the initiation of all mRNA translation through initiator tRNA(fMet) aminoacylation. This Fusobacterium nucleatum subsp. nucleatum (strain ATCC 25586 / DSM 15643 / BCRC 10681 / CIP 101130 / JCM 8532 / KCTC 2640 / LMG 13131 / VPI 4355) protein is Methionine--tRNA ligase (metG).